A 440-amino-acid chain; its full sequence is Streptokinase (440 aa).

The first 26 residues, 1 to 26 (MKNYLSFGMFALLFALTFGTVKPVQA), serve as a signal peptide directing secretion. A disordered region spans residues 72–94 (PAQGGKTEQGLRPKSKPLATDKG).

In terms of biological role, this protein is not a protease, but it activates plasminogen by complexing with it. As a potential virulence factor, it is thought to prevent the formation of effective fibrin barriers around the site of infection, thereby contributing to the invasiveness of the cells. The polypeptide is Streptokinase (ska) (Streptococcus pyogenes).